Reading from the N-terminus, the 839-residue chain is Small conductance calcium-activated potassium channel protein 2 (839 aa).

4 disordered regions span residues 1 to 33 (MPIV…QESP), 64 to 115 (QRGF…QQPG), 195 to 258 (ALRQ…RRES), and 280 to 375 (SNLS…KKNQ). 2 stretches are compositionally biased toward low complexity: residues 198-212 (QQYA…QYHQ) and 219-235 (ATSP…GPPL). Over residues 236-253 (SHHHHHPHPAHHQHHQPQ) the composition is skewed to basic residues. Residues 313–326 (SSPSAAAAASSSAP) show a composition bias toward low complexity. Gly residues predominate over residues 345–363 (GTGGGGSTGGGGGGSGHGS). The chain crosses the membrane as a helical span at residues 398-418 (ALIFGMFGIVVMVIETELSWG). Phosphotyrosine is present on Tyr420. Residues 428–448 (LALKCLISLSTIILLGLIIVY) traverse the membrane as a helical segment. A helical transmembrane segment spans residues 474–494 (IFFICLEILVCAIHPIPGNYT). A helical membrane pass occupies residues 516–536 (IILSIPMFLRLYLIARVMLLH). A helical membrane pass occupies residues 565–585 (LMTICPGTVLLVFSISLWIIA). Positions 605–625 (FLGAMWLISITFLSIGYGDMV) form an intramembrane region, pore-forming. Residues 634-654 (VCLLTGIMGAGCTALVVAVVA) traverse the membrane as a helical segment. The tract at residues 672 to 748 (DTQLTKRVKN…LVDLAKTQNI (77 aa)) is calmodulin-binding. Over residues 810-819 (HVSYNAERSR) the composition is skewed to basic and acidic residues. A disordered region spans residues 810 to 839 (HVSYNAERSRSSSRRRRSSSTAPPTSSESS). The segment covering 828–839 (SSTAPPTSSESS) has biased composition (low complexity).

It belongs to the potassium channel KCNN family. KCa2.2/KCNN2 subfamily. Homodimer. Heteromultimer with KCNN1 and KCNN3. The complex is composed of 4 channel subunits each of which binds to a calmodulin subunit which regulates the channel activity through calcium-binding. Interacts (via N-terminal domain) with MPP2. As to expression, expressed in atrial and ventricular myocytes with higher levels in atrial myocytes (at protein level). Highly expressed in brain, liver and colon with low levels in kidney and testis. In colon, detected in smooth muscle cells.

The protein resides in the membrane. It localises to the cytoplasm. Its subcellular location is the myofibril. The protein localises to the sarcomere. It is found in the z line. It carries out the reaction K(+)(in) = K(+)(out). Inhibited by bee venom neurotoxin apamin. Inhibited by UCL 1684 and tetraethylammonium (TEA). Its function is as follows. Small conductance calcium-activated potassium channel that mediates the voltage-independent transmembrane transfer of potassium across the cell membrane through a constitutive interaction with calmodulin which binds the intracellular calcium allowing its opening. The current is characterized by a voltage-independent activation, an intracellular calcium concentration increase-dependent activation and a single-channel conductance of about 3 picosiemens. Also presents an inwardly rectifying current, thus reducing its already small outward conductance of potassium ions, which is particularly the case when the membrane potential displays positive values, above + 20 mV. The inward rectification could be due to a blockade of the outward current by intracellular divalent cations such as calcium and magnesium and could also be due to an intrinsic property of the channel pore, independent of intracellular divalent ions. There are three positively charged amino acids in the S6 transmembrane domain, close to the pore, that collectively control the conductance and rectification through an electrostatic mechanism. Additionally, electrostatic contributions from these residues also play an important role in determining the intrinsic open probability of the channel in the absence of calcium, affecting the apparent calcium affinity for activation. Forms an heteromeric complex with calmodulin, which is constitutively associated in a calcium-independent manner. Channel opening is triggered when calcium binds the calmodulin resulting in a rotary movement leading to the formation of the dimeric complex to open the gate. Plays a role in the repolarization phase of cardiac action potential. The sequence is that of Small conductance calcium-activated potassium channel protein 2 from Mus musculus (Mouse).